A 96-amino-acid polypeptide reads, in one-letter code: Antigen H4 (96 aa).

The segment at 1–20 (EFQEEIKEGVEEHKHEDDPE) is disordered. N-linked (GlcNAc...) asparagine glycosylation is present at asparagine 34.

The protein is Antigen H4 (H4) of Toxoplasma gondii.